The primary structure comprises 29 residues: Trypsin inhibitor 2 (29 aa).

Disulfide bonds link Cys3–Cys20, Cys10–Cys22, and Cys16–Cys28.

This sequence belongs to the protease inhibitor I7 (squash-type serine protease inhibitor) family.

It is found in the secreted. Its function is as follows. Inhibits trypsin. The chain is Trypsin inhibitor 2 from Bryonia dioica (Red bryony).